Reading from the N-terminus, the 222-residue chain is Uridine diphosphate glucose pyrophosphatase NUDT14 (222 aa).

Residues 38 to 206 (KTHDSVTILM…DIPKTLGVIY (169 aa)) form the Nudix hydrolase domain. The short motif at 111–129 (PGLSLEEAACKEAWEECGY) is the Nudix box element.

It belongs to the Nudix hydrolase family. Homodimer. Mg(2+) serves as cofactor.

Its subcellular location is the cytoplasm. It carries out the reaction UDP-sugar + H2O = UMP + alpha-D-aldose 1-phosphate.. Its function is as follows. Hydrolyzes UDP-glucose to glucose 1-phosphate and UMP and ADP-ribose to ribose 5-phosphate and AMP. The physiological substrate is probably UDP-glucose. Poor activity on other substrates such as ADP-glucose, CDP-glucose, GDP-glucose and GDP-mannose. This chain is Uridine diphosphate glucose pyrophosphatase NUDT14 (Nudt14), found in Mus musculus (Mouse).